Reading from the N-terminus, the 70-residue chain is UPF0352 protein PBPRA2586 (70 aa).

This sequence belongs to the UPF0352 family.

The sequence is that of UPF0352 protein PBPRA2586 from Photobacterium profundum (strain SS9).